The chain runs to 122 residues: Large ribosomal subunit protein uL14 (122 aa).

This sequence belongs to the universal ribosomal protein uL14 family. As to quaternary structure, part of the 50S ribosomal subunit. Forms a cluster with proteins L3 and L19. In the 70S ribosome, L14 and L19 interact and together make contacts with the 16S rRNA in bridges B5 and B8.

Its function is as follows. Binds to 23S rRNA. Forms part of two intersubunit bridges in the 70S ribosome. The chain is Large ribosomal subunit protein uL14 from Rhodococcus erythropolis (strain PR4 / NBRC 100887).